Consider the following 1563-residue polypeptide: Galactose-specific cell agglutination protein gsf2 (1563 aa).

The N-terminal stretch at 1 to 27 is a signal peptide; the sequence is MSVRRFLSTSARALLFTAALLPSLTSG. 29 consecutive repeat copies span residues 203–280, 281–358, 359–436, 437–514, 515–592, 593–670, 671–750, 751–825, 826–869, 870–913, 914–957, 958–1001, 1002–1045, 1046–1089, 1090–1133, 1134–1140, 1141–1162, 1163–1184, 1185–1200, 1201–1221, 1223–1244, 1245–1266, 1267–1282, 1283–1304, 1305–1326, 1327–1348, 1349–1364, 1365–1386, and 1387–1397. The 8 X 78 AA approximate tandem repeats stretch occupies residues 203–825; sequence TTTTTVGYPG…IPTGTTGTTT (623 aa). N-linked (GlcNAc...) asparagine glycosylation is found at Asn-224, Asn-263, Asn-302, Asn-341, Asn-380, Asn-419, Asn-458, Asn-497, Asn-536, Asn-575, Asn-614, and Asn-653. N-linked (GlcNAc...) asparagine glycosylation occurs at Asn-784. The interval 826 to 1140 is 8 X 44 AA approximate tandem repeats; it reads VVIQTPTTVT…TTTVVINTPT (315 aa). A disordered region spans residues 1135-1393; it reads VINTPTTTGS…TQVTTATEVQ (259 aa). Residues 1141 to 1397 form a 13 X 22 AA approximate tandem repeats region; sequence TTGSEVLPTT…TATEVQPTTA (257 aa). Residues Asn-1510, Asn-1516, Asn-1529, and Asn-1532 are each glycosylated (N-linked (GlcNAc...) asparagine). A lipid anchor (GPI-anchor amidated serine) is attached at Ser-1539. Residues 1540–1563 constitute a propeptide, removed in mature form; the sequence is SAGANKPIAYLTFVSLFVYIVTLI.

The protein belongs to the mam3/map4 family.

Its subcellular location is the cell membrane. Functionally, galactose-specific adhesion protein essential for non-sexual flocculation and filamentous growth. Required for adhesion and filamentous growth through recognition of galactose residues on cell surface glycoconjugates. Induces flocculation when overexpressed. The chain is Galactose-specific cell agglutination protein gsf2 from Schizosaccharomyces pombe (strain 972 / ATCC 24843) (Fission yeast).